The following is a 283-amino-acid chain: Phosphate import ATP-binding protein PstB (283 aa).

A compositionally biased stretch (polar residues) spans 1 to 20 (MAQTLAQTKQISQSHTFDVS). Positions 1-33 (MAQTLAQTKQISQSHTFDVSQSHHKTPNDTNSH) are disordered. The 242-residue stretch at 37-278 (YSTQNLDLWY…PSNKKTEDYI (242 aa)) folds into the ABC transporter domain. Residue 69 to 76 (GPSGCGKS) coordinates ATP.

Belongs to the ABC transporter superfamily. Phosphate importer (TC 3.A.1.7) family. In terms of assembly, the complex is composed of two ATP-binding proteins (PstB), two transmembrane proteins (PstC and PstA) and a solute-binding protein (PstS).

The protein localises to the cell membrane. The catalysed reaction is phosphate(out) + ATP + H2O = ADP + 2 phosphate(in) + H(+). Functionally, part of the ABC transporter complex PstSACB involved in phosphate import. Responsible for energy coupling to the transport system. The polypeptide is Phosphate import ATP-binding protein PstB (Staphylococcus aureus (strain bovine RF122 / ET3-1)).